Here is a 501-residue protein sequence, read N- to C-terminus: Glutamate--tRNA ligase (501 aa).

A 'HIGH' region motif is present at residues 11–21 (PSPTGFLHIGN). The 'KMSKS' region signature appears at 257 to 261 (KLSKR). Lys260 serves as a coordination point for ATP.

The protein belongs to the class-I aminoacyl-tRNA synthetase family. Glutamate--tRNA ligase type 1 subfamily. Monomer.

Its subcellular location is the cytoplasm. It carries out the reaction tRNA(Glu) + L-glutamate + ATP = L-glutamyl-tRNA(Glu) + AMP + diphosphate. Functionally, catalyzes the attachment of glutamate to tRNA(Glu) in a two-step reaction: glutamate is first activated by ATP to form Glu-AMP and then transferred to the acceptor end of tRNA(Glu). This is Glutamate--tRNA ligase from Limosilactobacillus reuteri subsp. reuteri (strain JCM 1112) (Lactobacillus reuteri).